Here is a 173-residue protein sequence, read N- to C-terminus: Putative phosphoesterase GTNG_0743 (173 aa).

Histidine 34 serves as the catalytic Proton donor. 2 short sequence motifs (HXTX) span residues histidine 34–leucine 37 and histidine 115–isoleucine 118. Histidine 115 serves as the catalytic Proton acceptor.

It belongs to the 2H phosphoesterase superfamily. YjcG family.

This is Putative phosphoesterase GTNG_0743 from Geobacillus thermodenitrificans (strain NG80-2).